We begin with the raw amino-acid sequence, 293 residues long: Microtubule-associated protein RP/EB family member 1B (293 aa).

Positions 13–115 constitute a Calponin-homology (CH) domain; it reads FVGRNEILSW…FLQWLKRFCD (103 aa). 2 disordered regions span residues 124–188 and 262–293; these read ENYN…SAEV and LGLEGYEEEGKEEEEEEEEEEEEAAAAAETQT. A compositionally biased stretch (basic and acidic residues) spans 129–141; that stretch reads VERRSRGGREKSV. The segment covering 151-166 has biased composition (polar residues); sequence LQTNNMHHPPVATSNK. The EB1 C-terminal domain maps to 180-250; sequence GGSNSSAEVQ…LYATDANESV (71 aa). Residues 266 to 285 are compositionally biased toward acidic residues; sequence GYEEEGKEEEEEEEEEEEEA.

It belongs to the MAPRE family. Homodimer and heterodimer with EB1A. As to expression, highly expressed in guard cells of leaf stomata, pollen grains and pollen tubes. Expressed in young roots.

It localises to the cytoplasm. The protein resides in the cytoskeleton. The protein localises to the spindle pole. It is found in the phragmoplast. Binds to the plus end of microtubules and regulates the dynamics of the microtubule cytoskeleton. May be involved in anchoring microtubules to their nucleation sites and/or functioning as a reservoir for distribution to the growing end. In plants, microtubule minus ends are not necessarily severed from the nucleation site and transported to the plus end of a microtubule as part of the recycling process. May play a role in endomembrane organization during polarized growth of plant cells. The chain is Microtubule-associated protein RP/EB family member 1B (EB1B) from Arabidopsis thaliana (Mouse-ear cress).